Reading from the N-terminus, the 285-residue chain is NAD kinase (285 aa).

The Proton acceptor role is filled by aspartate 64. Residues 64–65, 140–141, arginine 151, arginine 168, aspartate 170, and 181–186 contribute to the NAD(+) site; these read DG, ND, and TGYNLS.

The protein belongs to the NAD kinase family. The cofactor is a divalent metal cation.

It localises to the cytoplasm. The enzyme catalyses NAD(+) + ATP = ADP + NADP(+) + H(+). In terms of biological role, involved in the regulation of the intracellular balance of NAD and NADP, and is a key enzyme in the biosynthesis of NADP. Catalyzes specifically the phosphorylation on 2'-hydroxyl of the adenosine moiety of NAD to yield NADP. The sequence is that of NAD kinase from Lachnoclostridium phytofermentans (strain ATCC 700394 / DSM 18823 / ISDg) (Clostridium phytofermentans).